Reading from the N-terminus, the 927-residue chain is 2-oxoadipate dehydrogenase complex component E1 (927 aa).

The protein belongs to the alpha-ketoglutarate dehydrogenase family. In terms of assembly, the 2-oxoadipate dehydrogenase complex is composed of OADH (2-oxoadipate dehydrogenase; E1a), DLST (dihydrolipoamide succinyltransferase; E2) and DLD (dihydrolipoamide dehydrogenase; E3). E1a functional unit is a dimer. Thiamine diphosphate is required as a cofactor.

It localises to the mitochondrion. The enzyme catalyses N(6)-[(R)-lipoyl]-L-lysyl-[protein] + 2-oxoadipate + H(+) = N(6)-[(R)-S(8)-glutaryldihydrolipoyl]-L-lysyl-[protein] + CO2. It participates in amino-acid degradation. Its function is as follows. 2-oxoadipate dehydrogenase (E1a) component of the 2-oxoadipate dehydrogenase complex (OADHC). Participates in the first step, rate limiting for the overall conversion of 2-oxoadipate (alpha-ketoadipate) to glutaryl-CoA and CO(2) catalyzed by the whole OADHC. Catalyzes the irreversible decarboxylation of 2-oxoadipate via the thiamine diphosphate (ThDP) cofactor and subsequent transfer of the decarboxylated acyl intermediate on an oxidized dihydrolipoyl group that is covalently amidated to the E2 enzyme (dihydrolipoyllysine-residue succinyltransferase or DLST). Can catalyze the decarboxylation of 2-oxoglutarate in vitro, but at a much lower rate than 2-oxoadipate. Responsible for the last step of L-lysine, L-hydroxylysine and L-tryptophan catabolism with the common product being 2-oxoadipate. The chain is 2-oxoadipate dehydrogenase complex component E1 (dhtkd1) from Xenopus laevis (African clawed frog).